The chain runs to 191 residues: Signal peptidase complex catalytic subunit sec11 (191 aa).

Over 1–18 (MLSFLSSNLSNVRQSLAQ) the chain is Cytoplasmic. The chain crosses the membrane as a helical; Signal-anchor for type II membrane protein span at residues 19-39 (VLNFALVLSTAFMMWKGLSVF). At 40–191 (TASSSPVVVV…MGLMVMLQRE (152 aa)) the chain is on the lumenal side. Residues serine 53, histidine 92, and aspartate 133 each act as charge relay system in the active site. Positions 177–188 (ALLGIMGLMVML) are C-terminal short (CTS) helix.

Belongs to the peptidase S26B family. As to quaternary structure, component of the signal peptidase complex (SPC) composed of a catalytic subunit SEC11 and three accessory subunits SPC1, SPC2 and SPC3. The complex induces a local thinning of the ER membrane which is used to measure the length of the signal peptide (SP) h-region of protein substrates. This ensures the selectivity of the complex towards h-regions shorter than 18-20 amino acids. SPC associates with the translocon complex.

It localises to the endoplasmic reticulum membrane. The enzyme catalyses Cleavage of hydrophobic, N-terminal signal or leader sequences from secreted and periplasmic proteins.. In terms of biological role, catalytic component of the signal peptidase complex (SPC) which catalyzes the cleavage of N-terminal signal sequences from nascent proteins as they are translocated into the lumen of the endoplasmic reticulum. Specifically cleaves N-terminal signal peptides that contain a hydrophobic alpha-helix (h-region) shorter than 18-20 amino acids. This Aspergillus oryzae (strain ATCC 42149 / RIB 40) (Yellow koji mold) protein is Signal peptidase complex catalytic subunit sec11 (sec11).